We begin with the raw amino-acid sequence, 395 residues long: Carbohydrate sulfotransferase 6 (395 aa).

At 1–5 (MWLPR) the chain is on the cytoplasmic side. Residues 6–26 (VSSTAVTALLLAQTFLLLFLV) traverse the membrane as a helical; Signal-anchor for type II membrane protein segment. At 27–395 (SRPGPSSPAG…ASSTASHPRN (369 aa)) the chain is on the lumenal side. 49–55 (WRSGSSF) is a 3'-phosphoadenylyl sulfate binding site. The N-linked (GlcNAc...) asparagine glycan is linked to N116. 202–210 (RDPRAVLRS) contributes to the 3'-phosphoadenylyl sulfate binding site. N229, N305, and N328 each carry an N-linked (GlcNAc...) asparagine glycan.

Belongs to the sulfotransferase 1 family. Gal/GlcNAc/GalNAc subfamily. As to expression, expressed in cornea. Mainly expressed in brain. Also expressed in spinal cord and trachea.

It localises to the golgi apparatus membrane. The catalysed reaction is 3'-phosphoadenylyl sulfate + keratan = adenosine 3',5'-bisphosphate + keratan 6'-sulfate.. In terms of biological role, sulfotransferase that utilizes 3'-phospho-5'-adenylyl sulfate (PAPS) as sulfonate donor to catalyze the transfer of sulfate to position 6 of non-reducing N-acetylglucosamine (GlcNAc) residues of keratan. Cooperates with B4GALT4 galactosyltransferase and B3GNT7 N-acetylglucosaminyltransferase to construct and elongate the sulfated disaccharide unit [-&gt;3Galbeta1-&gt;4(6-sulfoGlcNAcbeta)1-&gt;] within keratan sulfate polymer. Involved in biosynthesis of keratan sulfate in cornea, with an impact on proteoglycan fibril organization and corneal transparency. Involved in sulfation of endothelial mucins such as GLYCAM1. The protein is Carbohydrate sulfotransferase 6 of Homo sapiens (Human).